Reading from the N-terminus, the 544-residue chain is Epidermal growth factor-like protein 6 (544 aa).

Residues 1-30 (MAITGGMQSSDMVLLLWITVICACCSFVDS) form the signal peptide. The 36-residue stretch at 63-98 (RKGQCEAVCEQGCKHGECVGPNKCKCFPGFTGKNCN) folds into the EGF-like 1 domain. 6 disulfide bridges follow: cysteine 67-cysteine 80, cysteine 71-cysteine 86, cysteine 88-cysteine 97, cysteine 104-cysteine 115, cysteine 111-cysteine 124, and cysteine 126-cysteine 138. The 40-residue stretch at 100-139 (DLNECGLKPRPCEHRCMNTHGSYKCYCLNGYMLMPDGSCS) folds into the EGF-like 2; calcium-binding domain. The EGF-like 3 domain maps to 144–178 (CAMANCQYGCEQVKGDIRCLCPSGGLQLGPDGRTC). Residues 180–218 (DIDECAVGKASCPINRRCVNTFGSYYCKCQIGYELKYVN) form the EGF-like 4; calcium-binding domain. Disulfide bonds link cysteine 184-cysteine 197, cysteine 191-cysteine 206, cysteine 229-cysteine 242, cysteine 236-cysteine 251, and cysteine 253-cysteine 264. Residues 225 to 265 (DINECLLNTHKCSINADCLNTQGSFKCRCKHGFKGNGQECS) form the EGF-like 5; calcium-binding domain. Residues 332 to 357 (GNDNDEEEGEIEEEEEEELDEEDEEN) form a disordered region. A coiled-coil region spans residues 333 to 367 (NDNDEEEGEIEEEEEEELDEEDEENVIEEEKLLRG). A compositionally biased stretch (acidic residues) spans 334–357 (DNDEEEGEIEEEEEEELDEEDEEN). One can recognise an MAM domain in the interval 399-543 (VDCRFDQGTC…VFLSSGPCSD (145 aa)).

It belongs to the nephronectin family.

It is found in the secreted. It localises to the extracellular space. The protein resides in the extracellular matrix. The protein localises to the basement membrane. Its function is as follows. May play a role in organ morphogenesis. Promotes matrix assembly. In Xenopus laevis (African clawed frog), this protein is Epidermal growth factor-like protein 6 (egfl6).